Consider the following 160-residue polypeptide: Protein MGF 300-2R (160 aa).

Belongs to the asfivirus MGF 300 family.

Plays a role in virus cell tropism, and may be required for efficient virus replication in macrophages. The protein is Protein MGF 300-2R of African swine fever virus (isolate Tick/South Africa/Pretoriuskop Pr4/1996) (ASFV).